A 194-amino-acid polypeptide reads, in one-letter code: HTH-type transcriptional regulator BetI (194 aa).

Residues 8–68 enclose the HTH tetR-type domain; sequence EIRRAQLIDA…ATMRHVLRDL (61 aa). The segment at residues 31–50 is a DNA-binding region (H-T-H motif); the sequence is TLASVAQRANISTGIVSHYF.

It functions in the pathway amine and polyamine biosynthesis; betaine biosynthesis via choline pathway [regulation]. Its function is as follows. Repressor involved in the biosynthesis of the osmoprotectant glycine betaine. It represses transcription of the choline transporter BetT and the genes of BetAB involved in the synthesis of glycine betaine. This is HTH-type transcriptional regulator BetI from Burkholderia cenocepacia (strain HI2424).